The sequence spans 557 residues: 2-succinyl-5-enolpyruvyl-6-hydroxy-3-cyclohexene-1-carboxylate synthase (557 aa).

The protein belongs to the TPP enzyme family. MenD subfamily. As to quaternary structure, homodimer. It depends on Mg(2+) as a cofactor. The cofactor is Mn(2+). Requires thiamine diphosphate as cofactor.

It carries out the reaction isochorismate + 2-oxoglutarate + H(+) = 5-enolpyruvoyl-6-hydroxy-2-succinyl-cyclohex-3-ene-1-carboxylate + CO2. It functions in the pathway quinol/quinone metabolism; 1,4-dihydroxy-2-naphthoate biosynthesis; 1,4-dihydroxy-2-naphthoate from chorismate: step 2/7. The protein operates within quinol/quinone metabolism; menaquinone biosynthesis. Catalyzes the thiamine diphosphate-dependent decarboxylation of 2-oxoglutarate and the subsequent addition of the resulting succinic semialdehyde-thiamine pyrophosphate anion to isochorismate to yield 2-succinyl-5-enolpyruvyl-6-hydroxy-3-cyclohexene-1-carboxylate (SEPHCHC). In Staphylococcus aureus (strain Mu3 / ATCC 700698), this protein is 2-succinyl-5-enolpyruvyl-6-hydroxy-3-cyclohexene-1-carboxylate synthase.